Reading from the N-terminus, the 448-residue chain is UDP-N-acetylmuramoylalanine--D-glutamate ligase (448 aa).

116-122 contacts ATP; it reads GSNAKST.

The protein belongs to the MurCDEF family.

Its subcellular location is the cytoplasm. The enzyme catalyses UDP-N-acetyl-alpha-D-muramoyl-L-alanine + D-glutamate + ATP = UDP-N-acetyl-alpha-D-muramoyl-L-alanyl-D-glutamate + ADP + phosphate + H(+). It functions in the pathway cell wall biogenesis; peptidoglycan biosynthesis. Its function is as follows. Cell wall formation. Catalyzes the addition of glutamate to the nucleotide precursor UDP-N-acetylmuramoyl-L-alanine (UMA). In Pseudomonas savastanoi pv. phaseolicola (strain 1448A / Race 6) (Pseudomonas syringae pv. phaseolicola (strain 1448A / Race 6)), this protein is UDP-N-acetylmuramoylalanine--D-glutamate ligase.